The following is a 932-amino-acid chain: Protocadherin gamma-A6 (932 aa).

The N-terminal stretch at 1–29 (MAPPQRHPQRSEQVLLLTLLGTLWGAAAA) is a signal peptide. Cadherin domains lie at 30 to 133 (QIRY…TPRF), 134 to 242 (LKEE…TPMF), 243 to 347 (TQPV…VPEV), 348 to 452 (VVTS…PPTF), 453 to 562 (PHSS…APEI), and 570 to 682 (DGST…EPSA). Residues 30–692 (QIRYSIPEEL…KPNDSDLTLY (663 aa)) lie on the Extracellular side of the membrane. An N-linked (GlcNAc...) asparagine glycan is attached at Asn81. N-linked (GlcNAc...) asparagine glycosylation is found at Asn419 and Asn545. N-linked (GlcNAc...) asparagine glycosylation is present at Asn685. Residues 693-713 (LVVAVAAVSCVFLAFVIVLLA) traverse the membrane as a helical segment. The Cytoplasmic segment spans residues 714 to 932 (LRLQRWHKSR…KKKSGKKEKK (219 aa)). Disordered stretches follow at residues 804 to 841 (PRQL…WPNN) and 902 to 932 (ATLT…KEKK). The segment covering 806–841 (QLQQAPPNTDWRFSQAQRPGTSGSQNGDDTGTWPNN) has biased composition (polar residues). A compositionally biased stretch (basic residues) spans 922-932 (NKKKSGKKEKK).

It localises to the cell membrane. Functionally, potential calcium-dependent cell-adhesion protein. May be involved in the establishment and maintenance of specific neuronal connections in the brain. The polypeptide is Protocadherin gamma-A6 (PCDHGA6) (Homo sapiens (Human)).